Reading from the N-terminus, the 193-residue chain is MAERRVPFTFLTSPSWEPFRDWYHGSRLFDQSFGMPHIPEDWYKWPSGSAWPGYFRLLPSESALLPAPGSPYGRALSELSSGISEIRQSADSWKVTLDVNHFAPEELVVKTKDNIVEITGKHEEKQDEHGFISRCFTRKYTLPPGVEATAVRSSLSPDGMLTVEAPLPKPAIQSSEITIPVTVEAKKEEPAKK.

Phosphoserine occurs at positions 15 and 80. The region spanning arginine 74 to threonine 182 is the sHSP domain.

It belongs to the small heat shock protein (HSP20) family. As to quaternary structure, homooligomer. Homodimer; becomes monomeric upon activation. Heterooligomer. In terms of tissue distribution, smooth, cardiac and skeletal muscle, hardly detectable in fibroblasts or focal contacts.

Its subcellular location is the cytoplasm. The protein localises to the nucleus. The protein resides in the cytoskeleton. It localises to the spindle. Small heat shock protein which functions as a molecular chaperone probably maintaining denatured proteins in a folding-competent state. Plays a role in stress resistance and actin organization. The protein is Heat shock protein beta-1 (HSPB1) of Gallus gallus (Chicken).